Reading from the N-terminus, the 833-residue chain is ERAD-associated E3 ubiquitin-protein ligase component HRD3 (833 aa).

The signal sequence occupies residues 1 to 20 (MITLLLYLCVICNAIVLIRA). N-linked (GlcNAc...) asparagine glycosylation is found at N101, N123, and N142. The Sel1-like 1 repeat unit spans residues 103–139 (SEATYTLSQIHLWSQYNFPHNMTLAHKYLEKFNDLTH). 6 Sel1-like repeats span residues 143 to 186 (HSAI…QLGN), 187 to 222 (LKAK…EQLR), 413 to 445 (GRAC…KTQA), 552 to 595 (ETAQ…KQGN), 596 to 627 (IDAG…LKYS), and 628 to 663 (IQAI…EHDH). An N-linked (GlcNAc...) asparagine glycan is attached at N429. N-linked (GlcNAc...) asparagine glycosylation occurs at N611. Residues 768 to 788 (LVTMGCILGIFLLSILMSTLA) form a helical membrane-spanning segment. The disordered stretch occupies residues 805–824 (NGNRQQEQQQQQQAQGPPGW). Over residues 809-819 (QQEQQQQQQAQ) the composition is skewed to low complexity.

Belongs to the sel-1 family. In terms of assembly, component of the HRD1 ubiquitin ligase complex which contains the E3 ligase HRD1, its cofactors HRD3, USA1 and DER1, substrate recruiting factor YOS9 and CDC48-binding protein UBX2. Within the complex, interacts directly with HRD1 and YOS9 (via N-terminus). In ERAD-L, HRD3 and YOS9 jointly bind misfolded glycoproteins in the endoplasmic reticulum (ER) lumen. Movement of ERAD-L substrates through the ER membrane is facilitated by HRD1 and DER1 which have lateral gates facing each other and which distort the membrane region between the lateral gates, making it much thinner than a normal phospholipid bilayer. Substrates insert into the membrane as a hairpin loop with one strand interacting with DER1 and the other with HRD1. The HRD1 complex interacts with the heterotrimeric CDC48-NPL4-UFD1 ATPase complex which is recruited by UBX2 via its interaction with CDC48 and which moves ubiquitinated substrates to the cytosol for targeting to the proteasome. The HRD1 complex interacts with the ERAD substrates HMG1 and HMG2. Interacts with KAR2.

The protein resides in the endoplasmic reticulum membrane. Its function is as follows. Component of the endoplasmic reticulum quality control (ERQC) system involved in ubiquitin-dependent degradation of misfolded endoplasmic reticulum proteins. Component of the HRD1 ubiquitin ligase complex, which is part of the ERAD-L and ERAD-M pathways responsible for the rapid degradation of soluble lumenal and membrane proteins with misfolded lumenal domains (ERAD-L), or ER-membrane proteins with misfolded transmembrane domains (ERAD-M). ERAD-L substrates are ubiquitinated through HRD1 in conjunction with the E2 ubiquitin-conjugating enzymes UBC1 and UBC7-CUE1. Ubiquitinated substrates are then removed to the cytosol via the action of the CDC48-NPL4-UFD1 ATPase complex and targeted to the proteasome. ERAD-M substrates are processed by the same HRD1-HRD3 core complex, but only a subset of the other components is required for ERAD-M. Stabilizes the HRD1 ubiquitin-protein ligase. Also functions in recruiting misfolded protein substrates in conjunction with YOS9. The sequence is that of ERAD-associated E3 ubiquitin-protein ligase component HRD3 (HRD3) from Saccharomyces cerevisiae (strain ATCC 204508 / S288c) (Baker's yeast).